Consider the following 251-residue polypeptide: Ditrans,polycis-undecaprenyl-diphosphate synthase ((2E,6E)-farnesyl-diphosphate specific) (251 aa).

Asp21 is an active-site residue. Asp21 provides a ligand contact to Mg(2+). Substrate-binding positions include 22–25 (GNNR), Trp26, His38, and 66–68 (SSE). Asn69 serves as the catalytic Proton acceptor. Substrate is bound by residues Trp70, Arg72, Arg189, and 195–197 (RIS). Glu208 lines the Mg(2+) pocket.

This sequence belongs to the UPP synthase family. Homodimer. Mg(2+) serves as cofactor.

The catalysed reaction is 8 isopentenyl diphosphate + (2E,6E)-farnesyl diphosphate = di-trans,octa-cis-undecaprenyl diphosphate + 8 diphosphate. Catalyzes the sequential condensation of isopentenyl diphosphate (IPP) with (2E,6E)-farnesyl diphosphate (E,E-FPP) to yield (2Z,6Z,10Z,14Z,18Z,22Z,26Z,30Z,34E,38E)-undecaprenyl diphosphate (di-trans,octa-cis-UPP). UPP is the precursor of glycosyl carrier lipid in the biosynthesis of bacterial cell wall polysaccharide components such as peptidoglycan and lipopolysaccharide. The protein is Ditrans,polycis-undecaprenyl-diphosphate synthase ((2E,6E)-farnesyl-diphosphate specific) of Pseudomonas putida (strain ATCC 47054 / DSM 6125 / CFBP 8728 / NCIMB 11950 / KT2440).